Here is a 259-residue protein sequence, read N- to C-terminus: Imidazole glycerol phosphate synthase subunit HisF (259 aa).

Catalysis depends on residues Asp-11 and Asp-130.

The protein belongs to the HisA/HisF family. Heterodimer of HisH and HisF.

It is found in the cytoplasm. The enzyme catalyses 5-[(5-phospho-1-deoxy-D-ribulos-1-ylimino)methylamino]-1-(5-phospho-beta-D-ribosyl)imidazole-4-carboxamide + L-glutamine = D-erythro-1-(imidazol-4-yl)glycerol 3-phosphate + 5-amino-1-(5-phospho-beta-D-ribosyl)imidazole-4-carboxamide + L-glutamate + H(+). The protein operates within amino-acid biosynthesis; L-histidine biosynthesis; L-histidine from 5-phospho-alpha-D-ribose 1-diphosphate: step 5/9. Functionally, IGPS catalyzes the conversion of PRFAR and glutamine to IGP, AICAR and glutamate. The HisF subunit catalyzes the cyclization activity that produces IGP and AICAR from PRFAR using the ammonia provided by the HisH subunit. The protein is Imidazole glycerol phosphate synthase subunit HisF of Nitratidesulfovibrio vulgaris (strain DP4) (Desulfovibrio vulgaris).